The following is a 206-amino-acid chain: Translation machinery-associated protein 22 (206 aa).

One can recognise an SUI1 domain in the interval 98-169 (VVIKREARTK…EVEKYIHSLL (72 aa)). A disordered region spans residues 184 to 206 (SQKKKKKPTDEANSNNNNNNNNK). Over residues 196–206 (NSNNNNNNNNK) the composition is skewed to low complexity.

It belongs to the DENR family. Interacts with the 40S ribosomal subunit.

The protein resides in the cytoplasm. The sequence is that of Translation machinery-associated protein 22 (TMA22) from Vanderwaltozyma polyspora (strain ATCC 22028 / DSM 70294 / BCRC 21397 / CBS 2163 / NBRC 10782 / NRRL Y-8283 / UCD 57-17) (Kluyveromyces polysporus).